The following is a 319-amino-acid chain: Formimidoylglutamase (319 aa).

The Mn(2+) site is built by H131, D154, H156, D158, C248, and D250.

It belongs to the arginase family. It depends on Mn(2+) as a cofactor.

The catalysed reaction is N-formimidoyl-L-glutamate + H2O = formamide + L-glutamate. The protein operates within amino-acid degradation; L-histidine degradation into L-glutamate; L-glutamate from N-formimidoyl-L-glutamate (hydrolase route): step 1/1. Functionally, catalyzes the conversion of N-formimidoyl-L-glutamate to L-glutamate and formamide. This Legionella pneumophila subsp. pneumophila (strain Philadelphia 1 / ATCC 33152 / DSM 7513) protein is Formimidoylglutamase.